The primary structure comprises 48 residues: uncharacterized protein (48 aa).

The chain crosses the membrane as a helical span at residues 25 to 47; that stretch reads TFASIGVTVGVQIVILLIWGLSW.

The protein resides in the membrane. This is an uncharacterized protein from Archaeoglobus fulgidus (strain ATCC 49558 / DSM 4304 / JCM 9628 / NBRC 100126 / VC-16).